The chain runs to 330 residues: MTLIVTGAAGFIGSNLVKALNERGEQRIIAVDNLTRADKFKNLVDCEIDDYLDKTEFVERFRRGDFGKVRAIFHEGACSDTMETDGRYMMDNNFRYSREVLDVCLAQNIQFLYASSAATYGGSSRFVEEREVEQPLNVYGYSKFLFDQVIRRVLPTAKSQIAGFRYFNVYGPRETHKARMASVAFHNFNQFRAEGKVKLFGEYNGYAAGEQTRDFVSVEDVVKVNLFFFDNPDKSGIFNLGSGRAQPFNDIASTVVNTLRSLNNEPALSLAEQVQRGLIEYISFPDALRGKYQCFTQADQSKLRAAGYDAPFLSVQEGVDRYVRWLFGQV.

NADP(+) contacts are provided by residues 11 to 12, 32 to 33, Lys39, Lys54, 75 to 79, and Asn92; these read FI, DN, and EGACS. Tyr139 serves as the catalytic Proton acceptor. Residue Lys143 coordinates NADP(+). Substrate is bound at residue Asn168. NADP(+) contacts are provided by Val169 and Lys177. The Proton acceptor role is filled by Lys177. Substrate-binding positions include Arg179, His186, 200–203, Arg213, and Tyr292; that span reads FGEY.

Belongs to the NAD(P)-dependent epimerase/dehydratase family. HldD subfamily. In terms of assembly, homopentamer. NADP(+) is required as a cofactor.

The catalysed reaction is ADP-D-glycero-beta-D-manno-heptose = ADP-L-glycero-beta-D-manno-heptose. The protein operates within nucleotide-sugar biosynthesis; ADP-L-glycero-beta-D-manno-heptose biosynthesis; ADP-L-glycero-beta-D-manno-heptose from D-glycero-beta-D-manno-heptose 7-phosphate: step 4/4. In terms of biological role, catalyzes the interconversion between ADP-D-glycero-beta-D-manno-heptose and ADP-L-glycero-beta-D-manno-heptose via an epimerization at carbon 6 of the heptose. This Paraburkholderia xenovorans (strain LB400) protein is ADP-L-glycero-D-manno-heptose-6-epimerase.